Consider the following 256-residue polypeptide: ATP-dependent dethiobiotin synthetase BioD (256 aa).

13 to 18 (EVGKTY) is a binding site for ATP. Position 17 (T17) interacts with Mg(2+). Residue K38 is part of the active site. S42 contributes to the substrate binding site. ATP is bound by residues D56, 118 to 121 (EGAG), and 187 to 188 (NR). 2 residues coordinate Mg(2+): D56 and E118.

This sequence belongs to the dethiobiotin synthetase family. As to quaternary structure, homodimer. Mg(2+) serves as cofactor.

Its subcellular location is the cytoplasm. The catalysed reaction is (7R,8S)-7,8-diammoniononanoate + CO2 + ATP = (4R,5S)-dethiobiotin + ADP + phosphate + 3 H(+). It participates in cofactor biosynthesis; biotin biosynthesis; biotin from 7,8-diaminononanoate: step 1/2. Functionally, catalyzes a mechanistically unusual reaction, the ATP-dependent insertion of CO2 between the N7 and N8 nitrogen atoms of 7,8-diaminopelargonic acid (DAPA, also called 7,8-diammoniononanoate) to form a ureido ring. The protein is ATP-dependent dethiobiotin synthetase BioD of Rhodopirellula baltica (strain DSM 10527 / NCIMB 13988 / SH1).